A 247-amino-acid chain; its full sequence is 1-(5-phosphoribosyl)-5-[(5-phosphoribosylamino)methylideneamino] imidazole-4-carboxamide isomerase (247 aa).

Asp-8 functions as the Proton acceptor in the catalytic mechanism. Asp-130 (proton donor) is an active-site residue.

Belongs to the HisA/HisF family.

It is found in the cytoplasm. It carries out the reaction 1-(5-phospho-beta-D-ribosyl)-5-[(5-phospho-beta-D-ribosylamino)methylideneamino]imidazole-4-carboxamide = 5-[(5-phospho-1-deoxy-D-ribulos-1-ylimino)methylamino]-1-(5-phospho-beta-D-ribosyl)imidazole-4-carboxamide. Its pathway is amino-acid biosynthesis; L-histidine biosynthesis; L-histidine from 5-phospho-alpha-D-ribose 1-diphosphate: step 4/9. This is 1-(5-phosphoribosyl)-5-[(5-phosphoribosylamino)methylideneamino] imidazole-4-carboxamide isomerase from Leptospira biflexa serovar Patoc (strain Patoc 1 / Ames).